The following is a 394-amino-acid chain: Elongation factor Tu (394 aa).

One can recognise a tr-type G domain in the interval 10–204 (KPHVNVGTIG…ALDSYIPEPE (195 aa)). A G1 region spans residues 19 to 26 (GHVDHGKT). 19-26 (GHVDHGKT) contributes to the GTP binding site. Residue Thr26 participates in Mg(2+) binding. The G2 stretch occupies residues 60 to 64 (GITIA). A G3 region spans residues 81–84 (DCPG). GTP is bound by residues 81–85 (DCPGH) and 136–139 (NKCD). A G4 region spans residues 136–139 (NKCD). The interval 174–176 (SAL) is G5.

This sequence belongs to the TRAFAC class translation factor GTPase superfamily. Classic translation factor GTPase family. EF-Tu/EF-1A subfamily. Monomer.

It is found in the cytoplasm. The enzyme catalyses GTP + H2O = GDP + phosphate + H(+). GTP hydrolase that promotes the GTP-dependent binding of aminoacyl-tRNA to the A-site of ribosomes during protein biosynthesis. This is Elongation factor Tu from Vibrio campbellii (strain ATCC BAA-1116).